The following is a 282-amino-acid chain: Ribonuclease P protein subunit p38 (282 aa).

Disordered stretches follow at residues M1–V21 and E61–G103. A2 is subject to N-acetylalanine. S12 is subject to Phosphoserine. Over residues E88 to G97 the composition is skewed to basic and acidic residues. Phosphoserine is present on residues S226 and S235. The segment at K262–K282 is disordered. A compositionally biased stretch (basic residues) spans K269–K282.

It belongs to the eukaryotic ribosomal protein eL8 family. In terms of assembly, component of nuclear RNase P and RNase MRP ribonucleoproteins. RNase P consists of a catalytic RNA moiety and about 10 protein subunits; POP1, POP4, POP5, POP7, RPP14, RPP21, RPP25, RPP30, RPP38 and RPP40. Within the RNase P complex, POP1, POP7 and RPP25 form the 'finger' subcomplex, POP5, RPP14, RPP40 and homodimeric RPP30 form the 'palm' subcomplex, and RPP21, POP4 and RPP38 form the 'wrist' subcomplex. All subunits of the RNase P complex interact with the catalytic RNA. Several subunits of RNase P are also part of the RNase MRP complex. RNase MRP consists of a catalytic RNA moiety and about 8 protein subunits; POP1, POP7, RPP25, RPP30, RPP38, RPP40 and possibly also POP4 and POP5.

It localises to the nucleus. It is found in the nucleolus. In terms of biological role, component of ribonuclease P, a ribonucleoprotein complex that generates mature tRNA molecules by cleaving their 5'-ends. Also a component of the MRP ribonuclease complex, which cleaves pre-rRNA sequences. This is Ribonuclease P protein subunit p38 (RPP38) from Bos taurus (Bovine).